The chain runs to 211 residues: Large ribosomal subunit protein uL4 (211 aa).

Polar residues predominate over residues 41 to 52 (QTNARQGTASTK). The tract at residues 41-78 (QTNARQGTASTKTRAEVRGGGRKPWRQKGTGRARAGSI) is disordered. Residues 60–71 (GGRKPWRQKGTG) are compositionally biased toward basic residues.

It belongs to the universal ribosomal protein uL4 family. In terms of assembly, part of the 50S ribosomal subunit.

Functionally, one of the primary rRNA binding proteins, this protein initially binds near the 5'-end of the 23S rRNA. It is important during the early stages of 50S assembly. It makes multiple contacts with different domains of the 23S rRNA in the assembled 50S subunit and ribosome. Forms part of the polypeptide exit tunnel. This chain is Large ribosomal subunit protein uL4, found in Rippkaea orientalis (strain PCC 8801 / RF-1) (Cyanothece sp. (strain PCC 8801)).